The sequence spans 229 residues: MKQQQWCGMTAKMGTVLSGVFTIMAVDMYLIFEQKHLGNGSCTEITPKYRGASNIINNFIICWSFKIVLFLSFITILISCFLLYSVYAQIFRGLVIYIVWIFFYETANVVIQILTNNDFDIKEVRIMRWFGLVSRTVMHCFWMFFVINYAHITYKNRSQGNIISYKRRISTAEILHSRNKRLSISSGFSGSHLESQYFERQSFHTSIFTCLSPVPSSAPSTCRYTIDVC.

A helical membrane pass occupies residues 13-33 (MGTVLSGVFTIMAVDMYLIFE). N-linked (GlcNAc...) asparagine glycosylation occurs at Asn-39. The next 3 membrane-spanning stretches (helical) occupy residues 67 to 87 (IVLF…YSVY), 94 to 114 (LVIY…IQIL), and 129 to 149 (WFGL…VINY). A glycan (N-linked (GlcNAc...) asparagine) is linked at Asn-156.

Its subcellular location is the membrane. The sequence is that of Transmembrane protein 217 (TMEM217) from Homo sapiens (Human).